The following is a 1179-amino-acid chain: DNA-directed RNA polymerase subunit beta (1179 aa).

Residues 1153–1162 (MREMEDEDEG) show a composition bias toward acidic residues. The segment at 1153 to 1179 (MREMEDEDEGNGEKLNLVLEGGSLNEE) is disordered.

The protein belongs to the RNA polymerase beta chain family. In terms of assembly, the RNAP catalytic core consists of 2 alpha, 1 beta, 1 beta' and 1 omega subunit. When a sigma factor is associated with the core the holoenzyme is formed, which can initiate transcription.

It catalyses the reaction RNA(n) + a ribonucleoside 5'-triphosphate = RNA(n+1) + diphosphate. Its function is as follows. DNA-dependent RNA polymerase catalyzes the transcription of DNA into RNA using the four ribonucleoside triphosphates as substrates. The protein is DNA-directed RNA polymerase subunit beta of Brevibacillus brevis (strain 47 / JCM 6285 / NBRC 100599).